The chain runs to 177 residues: 2''-aminoglycoside nucleotidyltransferase (177 aa).

The N-terminal domain stretch occupies residues 1–92 (MDTTQVTLIH…ELLDCEPAWW (92 aa)). The Mg(2+) site is built by aspartate 44, aspartate 46, and aspartate 86. Residue aspartate 86 is the Proton acceptor of the active site. The C-terminal domain stretch occupies residues 93–177 (ADEAYEIAEA…RAAFRSRYAA (85 aa)). Alanine 100 serves as a coordination point for kanamycin A.

Monomer. Mg(2+) is required as a cofactor.

It carries out the reaction nucleoside triphosphate + gentamicin = diphosphate + 2''-nucleotidylgentamicin.. Mediates bacterial resistance to kanamycin, gentamicin, dibekacin, sisomicin and tobramycin by adenylating the 2''-hydroxyl group of these antibiotics. The protein is 2''-aminoglycoside nucleotidyltransferase of Klebsiella pneumoniae.